A 293-amino-acid polypeptide reads, in one-letter code: Proteinase T (293 aa).

Residues 1–12 constitute a propeptide that is removed on maturation; sequence EFIEQDAVVTIS. Residues 19–293 enclose the Peptidase S8 domain; sequence PWGLARISSQ…VLINNGEGSA (275 aa). 2 disulfides stabilise this stretch: C46-C137 and C192-C262. Residues D51, H83, and S238 each act as charge relay system in the active site.

Belongs to the peptidase S8 family.

Functionally, serine proteinase. The protein is Proteinase T (PROT) of Parengyodontium album (Tritirachium album).